Consider the following 362-residue polypeptide: Heme A synthase (362 aa).

Transmembrane regions (helical) follow at residues 12–32 (AVKI…LVGG), 102–122 (VIGL…HLGG), 128–148 (LWLI…MVAS), 159–179 (ERLA…VWTL), and 198–218 (AAAL…VAGL). His262 serves as a coordination point for heme. Transmembrane regions (helical) follow at residues 264–286 (MLAY…ARAG), 291–311 (GAVW…FTLL), and 314–334 (VPIG…MLGV). Residue His322 participates in heme binding.

The protein belongs to the COX15/CtaA family. Type 2 subfamily. In terms of assembly, interacts with CtaB. Heme b is required as a cofactor.

It localises to the cell membrane. The catalysed reaction is Fe(II)-heme o + 2 A + H2O = Fe(II)-heme a + 2 AH2. The protein operates within porphyrin-containing compound metabolism; heme A biosynthesis; heme A from heme O: step 1/1. Functionally, catalyzes the conversion of heme O to heme A by two successive hydroxylations of the methyl group at C8. The first hydroxylation forms heme I, the second hydroxylation results in an unstable dihydroxymethyl group, which spontaneously dehydrates, resulting in the formyl group of heme A. This chain is Heme A synthase, found in Rhodopseudomonas palustris (strain BisA53).